A 356-amino-acid polypeptide reads, in one-letter code: Tyrosine recombinase XerS (356 aa).

The 106-residue stretch at 16-121 folds into the Core-binding (CB) domain; sequence TMPWYILEYY…ALSSLYKYLT (106 aa). One can recognise a Tyr recombinase domain in the interval 169–354; that stretch reads EFLQYIDREY…VNDEQKNALN (186 aa). Active-site residues include R210, K234, H306, R309, and H332. The active-site O-(3'-phospho-DNA)-tyrosine intermediate is the Y341.

Belongs to the 'phage' integrase family. XerS subfamily.

It is found in the cytoplasm. With respect to regulation, ftsK is required for recombination. Its function is as follows. Site-specific tyrosine recombinase, which acts by catalyzing the cutting and rejoining of the recombining DNA molecules. Essential to convert dimers of the bacterial chromosome into monomers to permit their segregation at cell division. The polypeptide is Tyrosine recombinase XerS (Streptococcus gordonii (strain Challis / ATCC 35105 / BCRC 15272 / CH1 / DL1 / V288)).